Consider the following 539-residue polypeptide: Chaperonin GroEL (539 aa).

ATP-binding positions include 29–32, 86–90, Gly-413, 476–478, and Asp-492; these read TIGP, DGTTT, and NAA.

Belongs to the chaperonin (HSP60) family. Forms a cylinder of 14 subunits composed of two heptameric rings stacked back-to-back. Interacts with the co-chaperonin GroES.

The protein resides in the cytoplasm. It catalyses the reaction ATP + H2O + a folded polypeptide = ADP + phosphate + an unfolded polypeptide.. In terms of biological role, together with its co-chaperonin GroES, plays an essential role in assisting protein folding. The GroEL-GroES system forms a nano-cage that allows encapsulation of the non-native substrate proteins and provides a physical environment optimized to promote and accelerate protein folding. The chain is Chaperonin GroEL from Staphylococcus epidermidis.